Here is a 598-residue protein sequence, read N- to C-terminus: Chromodomain Y-like protein (598 aa).

A disordered region spans residues 1–76; the sequence is MTFQASHRSA…VDKRKNKKGK (76 aa). Residues 44–56 are compositionally biased toward polar residues; the sequence is PSISVSSEQSGAQ. The Chromo domain occupies 61 to 121; it reads LQVERIVDKR…RHTEKQKEST (61 aa). The interval 61 to 309 is interaction with EZH2; it reads LQVERIVDKR…NIQTSVTGVT (249 aa). Residues 65 to 76 show a composition bias toward basic and acidic residues; the sequence is RIVDKRKNKKGK. S88 bears the Phosphoserine mark. The span at 112 to 121 shows a compositional bias: basic and acidic residues; it reads RHTEKQKEST. The tract at residues 112-149 is disordered; that stretch reads RHTEKQKESTLTRTNRTSPNNARKQISRSTNSNFSKTS. Positions 122-149 are enriched in polar residues; sequence LTRTNRTSPNNARKQISRSTNSNFSKTS. Residue K135 is modified to N6,N6,N6-trimethyllysine; by EHMT2; alternate. Position 135 is an N6,N6-dimethyllysine; by EHMT2; alternate (K135). Position 135 is an N6-methyllysine; by EHMT2; alternate (K135). Phosphoserine occurs at positions 170, 201, and 216. The interval 204–226 is disordered; that stretch reads KSRTAVDGFQSESPEKLDPVEQG. The segment at 362–594 is acetyl-CoA-binding domain; sequence SENNSLNPEV…DSMLKYLQRK (233 aa).

In terms of assembly, forms multimers and multimerization is required for stable binding to chromatin. Interacts with HDAC1 and HDAC2 via its C-terminal acetyl-CoA-binding domain. Interacts with EZH2, EED, SUZ12, REST, EHMT1 and EHMT2. Part of a complex containing at least CDYL, REST, WIZ, SETB1, EHMT1 and EHMT2. Part of a complex containing at least CDYL, MIER1, MIER2, HDAC1 and HDAC2. Interacts with CHAF1A and CHAF1B; bridging the CAF-1 complex to the MCM2-7 (MCM) complex. Interacts with MCM3 and MCM5; bridging the CAF-1 complex to the MCM2-7 (MCM) complex. Recruited to Xist RNA-coated X chromosome. Interacts with EHMT2 and PRDM9; interaction only takes place when PRDM9 is bound to hotspot DNA. In terms of tissue distribution, expressed in the hippocampus with reduced expression in epileptic tissue compared to normal adjacent tissue (at protein level). Ubiquitous. Expressed at moderate levels in all tissues examined. Isoform 2: Most abundantly expressed isoform.

The protein localises to the nucleus. It localises to the chromosome. The enzyme catalyses 3-hydroxybutanoyl-CoA = (2E)-butenoyl-CoA + H2O. In terms of biological role, chromatin reader protein that recognizes and binds histone H3 trimethylated at 'Lys-9', dimethylated at 'Lys-27' and trimethylated at 'Lys-27' (H3K9me3, H3K27me2 and H3K27me3, respectively). Part of multimeric repressive chromatin complexes, where it is required for transmission and restoration of repressive histone marks, thereby preserving the epigenetic landscape. Required for chromatin targeting and maximal enzymatic activity of Polycomb repressive complex 2 (PRC2); acts as a positive regulator of PRC2 activity by bridging the pre-existing histone H3K27me3 and newly recruited PRC2 on neighboring nucleosomes. Acts as a corepressor for REST by facilitating histone-lysine N-methyltransferase EHMT2 recruitment and H3K9 dimethylation at REST target genes for repression. Involved in X chromosome inactivation in females: recruited to Xist RNA-coated X chromosome and facilitates propagation of H3K9me2 by anchoring EHMT2. Promotes EZH2 accumulation and H3K27me3 methylation at DNA double strand breaks (DSBs), thereby facilitating transcriptional repression at sites of DNA damage and homology-directed repair of DSBs. Required for neuronal migration during brain development by repressing expression of RHOA. By repressing the expression of SCN8A, contributes to the inhibition of intrinsic neuronal excitability and epileptogenesis. In addition to acting as a chromatin reader, acts as a hydro-lyase. Shows crotonyl-coA hydratase activity by mediating the conversion of crotonyl-CoA ((2E)-butenoyl-CoA) to beta-hydroxybutyryl-CoA (3-hydroxybutanoyl-CoA), thereby acting as a negative regulator of histone crotonylation. Histone crotonylation is required during spermatogenesis; down-regulation of histone crotonylation by CDYL regulates the reactivation of sex chromosome-linked genes in round spermatids and histone replacement in elongating spermatids. By regulating histone crotonylation and trimethylation of H3K27, may be involved in stress-induced depression-like behaviors, possibly by regulating VGF expression. Its function is as follows. Not able to recognize and bind histone H3K9me3, histone H3K27me2 and histone H3K27me3, due to the presence of a N-terminal extension that inactivates the chromo domain. Not able to recognize and bind histone H3K9me3, histone H3K27me2 and histone H3K27me3, due to the absence of the chromo domain. Acts as a negative regulator of isoform 2 by displacing isoform 2 from chromatin. This Homo sapiens (Human) protein is Chromodomain Y-like protein.